The sequence spans 166 residues: PR-toxin biosynthesis cluster protein 10 (166 aa).

Part of the gene cluster that mediates the biosynthesis of PR-toxin, a bicyclic sesquiterpene belonging to the eremophilane class and acting as a mycotoxin. The first step of the pathway is catalyzed by the aristolochene synthase which performs the cyclization of trans,trans-farnesyl diphosphate (FPP) to the bicyclic sesquiterpene aristolochene. Following the formation of aristolochene, the non-oxygenated aristolochene is converted to the trioxygenated intermediate eremofortin B, via 7-epi-neopetasone. This conversion appears to involve three enzymes, a hydroxysterol oxidase-like enzyme, the quinone-oxidase prx3 that forms the quinone-type-structure in the bicyclic nucleus of aristolochene with the C8-oxo group and the C-3 hydroxyl group, and the P450 monooxygenase prx9 that introduces the epoxide at the double bond between carbons 1 and 2. No monoxy or dioxy-intermediates have been reported to be released to the broth, so these three early oxidative reactions may be coupled together. Eremofortin B is further oxidized by another P450 monooxygenase, that introduces a second epoxide between carbons 7 and 11 prior to acetylation to eremofortin A by the acetyltransferase prx11. The second epoxidation may be performed by a second P450 monooxygenase. After the acetylation step, eremofortin A is converted to eremofortin C and then to PR-toxin. First the conversion of eremofortin A to eremofortin C proceeds by oxidation of the side chain of the molecule at C-12 and is catalyzed by the short-chain oxidoreductase prx1. The cytochrome P450 monooxygenase prx8 also plays a role in this step. The primary alcohol formed at C-12 is finally oxidized by the short-chain alcohol dehydrogenase prx4 that forms PR-toxin. In Penicillium rubens (strain ATCC 28089 / DSM 1075 / NRRL 1951 / Wisconsin 54-1255) (Penicillium chrysogenum), this protein is PR-toxin biosynthesis cluster protein 10.